Consider the following 297-residue polypeptide: Myoblast determination protein 1 homolog (297 aa).

A disordered region spans residues 52 to 76; it reads KPEEHPHHHGHHHGHPHEEEHVRAP. In terms of domain architecture, bHLH spans 101–152; that stretch reads DRRKAATMRERRRLSKVNEAFETLKRCTSTNPNQRLPKVEILRNAIRYIESL. Disordered regions lie at residues 171–221 and 243–297; these read SGES…GKSS and CPIL…YQVL. Polar residues-rich tracts occupy residues 174 to 184 and 258 to 297; these read SDASSPRSNCS and CSPQ…YQVL.

In terms of assembly, efficient DNA binding requires dimerization with another bHLH protein. Seems to form active heterodimers with ITF-2.

The protein resides in the nucleus. Its function is as follows. Acts as a transcriptional activator that promotes transcription of muscle-specific target genes and plays a role in muscle differentiation. Induces fibroblasts to differentiate into myoblasts. Interacts with and is inhibited by the twist protein. This interaction probably involves the basic domains of both proteins. This is Myoblast determination protein 1 homolog (MYOD1) from Coturnix japonica (Japanese quail).